The primary structure comprises 412 residues: Alanyl-tRNA editing protein Aarsd1-A (412 aa).

Zn(2+) contacts are provided by H108, H112, C208, and H212.

This sequence belongs to the class-II aminoacyl-tRNA synthetase family. Alax-L subfamily. Requires Zn(2+) as cofactor.

It is found in the cytoplasm. Functionally, functions in trans to edit the amino acid moiety from incorrectly charged tRNA(Ala). This chain is Alanyl-tRNA editing protein Aarsd1-A (aarsd1-a), found in Xenopus laevis (African clawed frog).